We begin with the raw amino-acid sequence, 655 residues long: A-type voltage-gated potassium channel KCND3 (655 aa).

The Cytoplasmic portion of the chain corresponds to Met1 to Ala182. The tract at residues Ala6 to Pro21 is interaction with KCNIP1 and KCNIP2. The segment at Glu70 to Asp78 is interaction with KCNIP1. Residues His104, Cys110, Cys131, and Cys132 each coordinate Zn(2+). Residue Ser153 is modified to Phosphoserine. The helical transmembrane segment at Leu183 to Thr204 threads the bilayer. The Extracellular portion of the chain corresponds to Val205 to Ser223. Residues Val224–Phe246 traverse the membrane as a helical segment. Residues Ala247 to Arg253 are Cytoplasmic-facing. A helical transmembrane segment spans residues Phe254–Thr277. Topologically, residues Asn278–Ser283 are extracellular. A helical; Voltage-sensor transmembrane segment spans residues Gly284–Gly306. Residues Leu307–Ala318 lie on the Cytoplasmic side of the membrane. Residues Ser319–Glu343 traverse the membrane as a helical segment. Over Lys344–Thr352 the chain is Extracellular. Residues Ser353–Thr366 constitute an intramembrane region (helical). Positions 367, 368, 369, and 370 each coordinate K(+). The short motif at Thr367–Asp372 is the Selectivity filter element. The stretch at Thr367–Val374 is an intramembrane region. Residues Ile378–Pro400 form a helical membrane-spanning segment. Residues Val401–Leu655 are Cytoplasmic-facing. Thr459 is subject to Phosphothreonine. Positions Ser470 to Thr487 are interaction with KCNIP1 and KCNIP2. The interval Ile472–Thr487 is mediates dendritic targeting. Polar residues predominate over residues Met525–Ser548. The interval Met525 to Thr565 is disordered. Ser569 carries the phosphoserine; by CaMK2D modification. A Phosphoserine modification is found at Ser585. The interval Ile615–Leu655 is disordered. A compositionally biased stretch (polar residues) spans Gly637–Ser647.

Belongs to the potassium channel family. D (Shal) (TC 1.A.1.2) subfamily. Kv4.3/KCND3 sub-subfamily. Homotetramer. Heterotetramer with KCND2. Associates with the regulatory subunits KCNIP3 and KCNIP4. Interacts with KCNE1, KCNE2, SCN1B and KCNAB1 and DLG1. Component of heteromultimeric potassium channels. Identified in potassium channel complexes containing KCND1, KCND2, KCND3, KCNIP1, KCNIP2, KCNIP3, KCNIP4, DPP6 and DPP10. Interacts with KCNIP1; each KCNIP1 monomer interacts with two adjacent KCND3 subunits, through both the N-terminal inactivation ball of a KCND3 subunit and a C-terminal helix from the adjacent KCND3 subunit, clamping them together; this interaction stabilizes the tetrameric form and modulates the channel gating kinetics namely channel activation and inactivation kinetics and rate of recovery from inactivation. Interacts with DPP6; this interaction modulates the channel gating kinetics namely channel activation and inactivation kinetics and rate of recovery from inactivation. Interacts with KCNIP2; each KCNIP2 monomer interacts with two adjacent KCND3 subunits, through both the N-terminal inactivation ball of a KCND3 subunit and a C-terminal helix from the adjacent KCND3 subunit, clamping them together; this interaction modulates the channel gating kinetics. In terms of processing, regulated through phosphorylation at Ser-569 by CaMK2D. As to expression, highly expressed in heart and brain, in particular in cortex, cerebellum, amygdala and caudate nucleus. Detected at lower levels in liver, skeletal muscle, kidney and pancreas.

The protein localises to the cell membrane. Its subcellular location is the sarcolemma. It is found in the cell projection. The protein resides in the dendrite. It carries out the reaction K(+)(in) = K(+)(out). Functionally, pore-forming (alpha) subunit of voltage-gated A-type potassium channels that mediates transmembrane potassium transport in excitable membranes, in brain and heart. In cardiomyocytes, may generate the transient outward potassium current I(To). In neurons, may conduct the transient subthreshold somatodendritic A-type potassium current (ISA). Kinetics properties are characterized by fast activation at subthreshold membrane potentials, rapid inactivation, and quick recovery from inactivation. Channel properties are modulated by interactions with regulatory subunits. Interaction with the regulatory subunits KCNIP1 or KCNIP2 modulates the channel gating kinetics namely channel activation and inactivation kinetics and rate of recovery from inactivation. Likewise, interaction with DPP6 modulates the channel gating kinetics namely channel activation and inactivation kinetics. In Homo sapiens (Human), this protein is A-type voltage-gated potassium channel KCND3 (KCND3).